The following is a 450-amino-acid chain: Glucose-6-phosphate isomerase (450 aa).

Residue Thr-39 is modified to Phosphothreonine. Residue Glu-291 is the Proton donor of the active site. Residues His-312 and Lys-426 contribute to the active site.

The protein belongs to the GPI family.

It localises to the cytoplasm. It carries out the reaction alpha-D-glucose 6-phosphate = beta-D-fructose 6-phosphate. It functions in the pathway carbohydrate biosynthesis; gluconeogenesis. It participates in carbohydrate degradation; glycolysis; D-glyceraldehyde 3-phosphate and glycerone phosphate from D-glucose: step 2/4. Functionally, catalyzes the reversible isomerization of glucose-6-phosphate to fructose-6-phosphate. The chain is Glucose-6-phosphate isomerase from Bacillus thuringiensis (strain Al Hakam).